The primary structure comprises 204 residues: Ras-related protein RabL (204 aa).

Residue 14–21 (GDSNVGKT) participates in GTP binding. The Effector region signature appears at 36–44 (RPPSIGPDY). Residues 62 to 66 (DTCGQ) and 120 to 123 (TKSD) each bind GTP. Residues C203 and C204 are each lipidated (S-geranylgeranyl cysteine).

It belongs to the small GTPase superfamily. Rab family.

It localises to the cell membrane. The chain is Ras-related protein RabL (rabL) from Dictyostelium discoideum (Social amoeba).